Reading from the N-terminus, the 86-residue chain is MTKTIFISTKENTGSIEFQIVNFTKKICKLTDHLKLHKKDYLSQRGLRQMLGKRQRLLVYLSKINLPSYNDLILKLKIREAKKDLS.

The protein belongs to the universal ribosomal protein uS15 family. Part of the 30S ribosomal subunit.

Its subcellular location is the plastid. The chain is Small ribosomal subunit protein uS15c (rps15) from Cuscuta gronovii (Common dodder).